A 246-amino-acid polypeptide reads, in one-letter code: Vacuolar iron transporter 2 (246 aa).

The Cytoplasmic segment spans residues 1-32 (MVKEFVQDEEKQRLLLDEHTEKHFTAGEVVRD). The chain crosses the membrane as a helical span at residues 33–53 (IIIGVSDGLTVPFALAAGLSG). The Vacuolar segment spans residues 54–58 (ANAPS). The chain crosses the membrane as a helical span at residues 59-79 (ALVLTAGLAEVAAGAISMGLG). Over 80 to 164 (GYLAAKSDAD…PEPRRALMSA (85 aa)) the chain is Cytoplasmic. Residues 86-161 (SDADHYHREL…LEKPEPRRAL (76 aa)) form a cytoplasmic metal binding domain (MBD) region. Positions 98, 101, 109, 112, 145, and 149 each coordinate Fe cation. The helical transmembrane segment at 165-185 (GTIALAYVVGGLVPLLPYMFV) threads the bilayer. At 186–190 (PTADR) the chain is on the vacuolar side. The helical transmembrane segment at 191–211 (AMATSVVVTLAALLFFGYVKG) threads the bilayer. Topologically, residues 212–218 (RFTGNRP) are cytoplasmic. Residues 219-239 (FISAFQTAVIGALASAAAFGM) traverse the membrane as a helical segment. Residues 240–246 (AKAVQSI) lie on the Vacuolar side of the membrane.

Belongs to the CCC1 family. As to quaternary structure, homodimer. The dimeric interaction is mediated by both the transmembrane domains (TMDs) and the cytoplasmic metal binding domain (MBD). As to expression, expressed in leaf sheaths and at lower level in leaf blades.

It localises to the vacuole membrane. The enzyme catalyses Fe(2+)(in) = Fe(2+)(out). Its function is as follows. Vacuolar iron transporter involved in the transfer of iron ions from the cytosol to the vacuole for intracellular iron storage. Vacuolar iron storage is required for seed embryo and seedling development. May be involved in the regulation of iron translocation between flag leaves and seeds. Can transport zinc ions from the cytosol to the vacuole. This Oryza sativa subsp. japonica (Rice) protein is Vacuolar iron transporter 2.